The following is a 125-amino-acid chain: Histone H2A.v3 (125 aa).

Belongs to the histone H2A family. The nucleosome is a histone octamer containing two molecules each of H2A, H2B, H3 and H4 assembled in one H3-H4 heterotetramer and two H2A-H2B heterodimers. The octamer wraps approximately 147 bp of DNA.

It localises to the nucleus. It is found in the chromosome. Core component of nucleosome which plays a central role in DNA double strand break (DSB) repair. Nucleosomes wrap and compact DNA into chromatin, limiting DNA accessibility to the cellular machineries which require DNA as a template. Histones thereby play a central role in transcription regulation, DNA repair, DNA replication and chromosomal stability. DNA accessibility is regulated via a complex set of post-translational modifications of histones, also called histone code, and nucleosome remodeling. The sequence is that of Histone H2A.v3 (H2Av3) from Dictyostelium discoideum (Social amoeba).